The chain runs to 159 residues: MKITIAAVGKLKEKYLKEAVSEYSKRLSRFTEIEIIEVDDEYAPDSLSVAQESQVKKKEAERLLKRVKQGSYVVLLDLAGEQTTSSGFSAKLENVMLSGNSHITFIIGGSLGLDQSLIKVADYRLCLSKMTYPHQLARVILMEQIYRAFKIIKNETYHK.

Residues leucine 76, glycine 108, and 127–132 (LSKMTY) contribute to the S-adenosyl-L-methionine site.

The protein belongs to the RNA methyltransferase RlmH family. As to quaternary structure, homodimer.

Its subcellular location is the cytoplasm. The catalysed reaction is pseudouridine(1915) in 23S rRNA + S-adenosyl-L-methionine = N(3)-methylpseudouridine(1915) in 23S rRNA + S-adenosyl-L-homocysteine + H(+). Its function is as follows. Specifically methylates the pseudouridine at position 1915 (m3Psi1915) in 23S rRNA. This chain is Ribosomal RNA large subunit methyltransferase H, found in Ruminiclostridium cellulolyticum (strain ATCC 35319 / DSM 5812 / JCM 6584 / H10) (Clostridium cellulolyticum).